The sequence spans 508 residues: POTE ankyrin domain family member G (508 aa).

5 ANK repeats span residues 172–201, 205–234, 238–267, 271–300, and 304–333; these read QKRTALHLASANGNSEVVKLLLDRRCQLNI, KKRTALTKAVQCREDECALMLLEHGTDPNI, YGNTALHYAIYNEDKLMAKALLLYGADIES, HGLTPLLLGVHEQKQQVVKFLIKKKANLNA, and YGRTALILAVCCGSASIVSLLLEQNIDVSS. Residues 367–376 show a composition bias toward polar residues; the sequence is KVSSENSNPE. The interval 367 to 488 is disordered; sequence KVSSENSNPE…QLSEEQNTGI (122 aa). 2 stretches are compositionally biased toward basic and acidic residues: residues 377-392 and 406-421; these read QDLKLTSEEESQRLKG and EINKGGDRKVEEEMKK. Polar residues predominate over residues 476 to 488; that stretch reads TQKQLSEEQNTGI.

Belongs to the POTE family.

The sequence is that of POTE ankyrin domain family member G (POTEG) from Homo sapiens (Human).